A 318-amino-acid chain; its full sequence is NADH-ubiquinone oxidoreductase chain 1 (318 aa).

9 helical membrane passes run 2-22, 37-57, 69-89, 100-120, 136-156, 171-191, 231-251, 253-273, and 293-313; these read FLMNILCLVIPILLAMAFLTL, PNIVGPYGLLQPIADAIKLFI, LMFTLAPTLAFTLALSLWIPM, LGVLFILALSSLAVYSILWSG, VAQTISYEVTLAIILLSVMMM, HMWLILPLWPLAMMWFISTLA, IIMMNALTATLFLGAFHNPLF, ELFTVNFITKTLILTAIFLWV, and FLPLTLALCMLHVSIPALSAG.

Belongs to the complex I subunit 1 family. In terms of assembly, core subunit of respiratory chain NADH dehydrogenase (Complex I) which is composed of 45 different subunits.

It localises to the mitochondrion inner membrane. It carries out the reaction a ubiquinone + NADH + 5 H(+)(in) = a ubiquinol + NAD(+) + 4 H(+)(out). Its function is as follows. Core subunit of the mitochondrial membrane respiratory chain NADH dehydrogenase (Complex I) which catalyzes electron transfer from NADH through the respiratory chain, using ubiquinone as an electron acceptor. Essential for the catalytic activity and assembly of complex I. This is NADH-ubiquinone oxidoreductase chain 1 (MT-ND1) from Zaedyus pichiy (Pichi).